Consider the following 322-residue polypeptide: Cytochrome c biogenesis protein CcsA (322 aa).

Transmembrane regions (helical) follow at residues 9–29 (ILTH…LITL), 44–64 (GMIA…IYSG), 71–91 (LYES…VPYF), 98–118 (LTTI…SGLL), 143–163 (MILS…LLVI), 226–246 (VISL…VWAN), 253–273 (WSWD…AIYL), and 287–307 (AIVA…VNLL).

This sequence belongs to the CcmF/CycK/Ccl1/NrfE/CcsA family. As to quaternary structure, may interact with Ccs1.

It is found in the plastid. Its subcellular location is the chloroplast thylakoid membrane. Its function is as follows. Required during biogenesis of c-type cytochromes (cytochrome c6 and cytochrome f) at the step of heme attachment. This is Cytochrome c biogenesis protein CcsA from Guizotia abyssinica (Niger).